The following is a 212-amino-acid chain: Pyridoxine/pyridoxamine 5'-phosphate oxidase (212 aa).

FMN contacts are provided by residues 61 to 66 (RSVLLK), 76 to 77 (YT), lysine 83, and glutamine 105. Lysine 66 serves as a coordination point for substrate. Positions 123, 127, and 131 each coordinate substrate. Residues 140-141 (QS) and tryptophan 185 contribute to the FMN site. Residue 191 to 193 (RLH) coordinates substrate. FMN is bound at residue arginine 195.

The protein belongs to the pyridoxamine 5'-phosphate oxidase family. Homodimer. FMN serves as cofactor.

It carries out the reaction pyridoxamine 5'-phosphate + O2 + H2O = pyridoxal 5'-phosphate + H2O2 + NH4(+). The catalysed reaction is pyridoxine 5'-phosphate + O2 = pyridoxal 5'-phosphate + H2O2. It participates in cofactor metabolism; pyridoxal 5'-phosphate salvage; pyridoxal 5'-phosphate from pyridoxamine 5'-phosphate: step 1/1. It functions in the pathway cofactor metabolism; pyridoxal 5'-phosphate salvage; pyridoxal 5'-phosphate from pyridoxine 5'-phosphate: step 1/1. In terms of biological role, catalyzes the oxidation of either pyridoxine 5'-phosphate (PNP) or pyridoxamine 5'-phosphate (PMP) into pyridoxal 5'-phosphate (PLP). This is Pyridoxine/pyridoxamine 5'-phosphate oxidase from Dichelobacter nodosus (strain VCS1703A).